A 123-amino-acid polypeptide reads, in one-letter code: Holo-[acyl-carrier-protein] synthase (123 aa).

2 residues coordinate Mg(2+): aspartate 8 and glutamate 55.

Belongs to the P-Pant transferase superfamily. AcpS family. It depends on Mg(2+) as a cofactor.

It is found in the cytoplasm. The enzyme catalyses apo-[ACP] + CoA = holo-[ACP] + adenosine 3',5'-bisphosphate + H(+). Its function is as follows. Transfers the 4'-phosphopantetheine moiety from coenzyme A to a Ser of acyl-carrier-protein. The protein is Holo-[acyl-carrier-protein] synthase of Caldicellulosiruptor saccharolyticus (strain ATCC 43494 / DSM 8903 / Tp8T 6331).